The chain runs to 483 residues: Probable glycine dehydrogenase (decarboxylating) subunit 2 (483 aa).

An N6-(pyridoxal phosphate)lysine modification is found at Lys-264.

Belongs to the GcvP family. C-terminal subunit subfamily. The glycine cleavage system is composed of four proteins: P, T, L and H. In this organism, the P 'protein' is a heterodimer of two subunits. Pyridoxal 5'-phosphate serves as cofactor.

It catalyses the reaction N(6)-[(R)-lipoyl]-L-lysyl-[glycine-cleavage complex H protein] + glycine + H(+) = N(6)-[(R)-S(8)-aminomethyldihydrolipoyl]-L-lysyl-[glycine-cleavage complex H protein] + CO2. In terms of biological role, the glycine cleavage system catalyzes the degradation of glycine. The P protein binds the alpha-amino group of glycine through its pyridoxal phosphate cofactor; CO(2) is released and the remaining methylamine moiety is then transferred to the lipoamide cofactor of the H protein. This is Probable glycine dehydrogenase (decarboxylating) subunit 2 from Nitrosomonas eutropha (strain DSM 101675 / C91 / Nm57).